Reading from the N-terminus, the 848-residue chain is MNLESTATSAEYWSDLADALNTPMMKQFLAIKKDFPDTILFFRMGDFYEMFLEDAKIASSILDIALTKRQNAVPMCGIPYHSKDNYISRLLNAGKKIAICEQSKPEEAGSKLMTRDVVRIITPGTVIEENLLSGFQNNYLAVLHLKKSLIYFAIADFSTGEVFYSSVSVTGLERLIAELEKFKPSEICVPKSEHTFFQELEYFKNREFTVLKNQIETSEKDSFQVLSKYLNEYIRETYRDNKLVLREPKILSSGKFLEMDRETIRNLELVENEKEKNNTLYSIFNFCNTAKGKRLLKQRILFPECDPVVLYSRWEKQDILLKTVLAPYITALKDFGDLERILTRFRGNHAYPRDFRSLLNSISSGIKLKEELEKVSYPFLIPIEELKKISDFIQERLHPGDDLPVILGNGIFLKKGFSQKLDQAREAGVKGKDWILDLETKEKKRTGLNTLKIRYNKIVGYFIEISRAQAEQAPKDYLKKQTLVGSERFTMPKLEEIERTILEADEIIQEIERTEFNRMVEEVLKFSSSLLSFSEEIGDLDFQISLLTAKDKFGWIRPKLSEDRSLDLNDSRHPVVEATLPPGQEFIPNSVYLDTQDKAIAVLTGPNMAGKSTFMRQIALNQILFQIGAFVPAKSAKLPIVDKLFTRIGAGDNLTAGESTFFVEMKETANILNHYTEDSLILFDEVGRGTSTYDGMSIAWSILEYLSSLSVRPKTIFATHYHELTELSRLGGIFNLYLETLEKEDRVLFLRKVKVGKAKKSFGIYVAKIAGVPEPIVKRAAELLTDLESKKKEIKIQEAQPTLFTEPETKNFNSQTEESILKLKLEEMTPIEALKTLEDFQKKLRKQK.

605–612 (GPNMAGKS) is a binding site for ATP.

This sequence belongs to the DNA mismatch repair MutS family.

In terms of biological role, this protein is involved in the repair of mismatches in DNA. It is possible that it carries out the mismatch recognition step. This protein has a weak ATPase activity. This Leptospira interrogans serogroup Icterohaemorrhagiae serovar copenhageni (strain Fiocruz L1-130) protein is DNA mismatch repair protein MutS.